Here is a 705-residue protein sequence, read N- to C-terminus: MPRLTPIVNYRNIGISAHIDAGKTTTTERILFYTGVNHKLGEVHHGSATMDWMAQEQERGITITSAATTCFWSGMSNQFSSHRINIIDTPGHVDFTIEVERSMRILDGAIMVYCAVGGVQPQSETVWRQANKYNVPRIAFINKMDRTGANYFNVINQIKDKLYANPIPIQLPIGKENNFVGIIDLIKMKSIYWSEIDQGITFEYKEIPKDLMVLSNSYRNILLETSAEASEKLTEKYLYKNLTEQDIIEGLRIRSLKNEIIPVTCGSAFKNKGIQSMLDTVINYLPSPKDIKYSKKNKFLSKNYKKSILPKDNEPFSALAFKIANDPFVGNLTFFRVYSGKIRSGNTVLNSAKDKQERFGRIVQMHANKREEIKEVRSGDIAAAIGLKDVTTGDTLCDPLHPIILEKMEFPEPVISVAVEPKTKSDQEKMSSALNRLAKEDPSFRVSSDEESGQTIISGMGELHLEILIDRMYREFNVRSNVGKPQVSYRETIKSCVEEEGKFIRQSGGRGQFGHVWLRIEPNKSNIAKNKNNYTFINKIVGGAIPKEFIPAIDKGIQEQLSNGVLAGYPIVDVCVTVFDGSYHEVDSSEIAFKIAASIAFKSAFMKASPILLEPIMKVEVETPNEYMGDVIGDLNRRRGIIDGMQDINMGKIIISKIPLSEMFGYATDLRSQTQGRASYSMEFLRYNELPNNITESIINSNQLK.

The tr-type G domain occupies 8–289 (VNYRNIGISA…TVINYLPSPK (282 aa)). GTP contacts are provided by residues 17–24 (AHIDAGKT), 88–92 (DTPGH), and 142–145 (NKMD).

Belongs to the TRAFAC class translation factor GTPase superfamily. Classic translation factor GTPase family. EF-G/EF-2 subfamily.

It is found in the cytoplasm. Its function is as follows. Catalyzes the GTP-dependent ribosomal translocation step during translation elongation. During this step, the ribosome changes from the pre-translocational (PRE) to the post-translocational (POST) state as the newly formed A-site-bound peptidyl-tRNA and P-site-bound deacylated tRNA move to the P and E sites, respectively. Catalyzes the coordinated movement of the two tRNA molecules, the mRNA and conformational changes in the ribosome. This is Elongation factor G from Wigglesworthia glossinidia brevipalpis.